A 273-amino-acid polypeptide reads, in one-letter code: Undecaprenyl-diphosphatase (273 aa).

7 helical membrane-spanning segments follow: residues 6–26, 45–65, 90–110, 116–136, 190–210, 222–242, and 252–272; these read SLLI…LPVS, AKTF…VMFW, LTLI…LLFH, LFNP…LIAA, YAAS…ATAL, GDIP…LIAI, and ISFI…YVVF.

The protein belongs to the UppP family.

Its subcellular location is the cell inner membrane. The enzyme catalyses di-trans,octa-cis-undecaprenyl diphosphate + H2O = di-trans,octa-cis-undecaprenyl phosphate + phosphate + H(+). Catalyzes the dephosphorylation of undecaprenyl diphosphate (UPP). Confers resistance to bacitracin. The chain is Undecaprenyl-diphosphatase from Escherichia coli O157:H7.